The following is a 454-amino-acid chain: tRNA-2-methylthio-N(6)-dimethylallyladenosine synthase (454 aa).

The MTTase N-terminal domain maps to 6–122 (RRYHITTYGC…LQDLLEQVAS (117 aa)). 6 residues coordinate [4Fe-4S] cluster: C15, C51, C85, C157, C161, and C164. In terms of domain architecture, Radical SAM core spans 143–384 (RDSAVTAWVN…GVCAELRSQR (242 aa)). In terms of domain architecture, TRAM spans 383 to 447 (QRYANRIEEV…SFSLTGEPLS (65 aa)).

Belongs to the methylthiotransferase family. MiaB subfamily. As to quaternary structure, monomer. The cofactor is [4Fe-4S] cluster.

Its subcellular location is the cytoplasm. It carries out the reaction N(6)-dimethylallyladenosine(37) in tRNA + (sulfur carrier)-SH + AH2 + 2 S-adenosyl-L-methionine = 2-methylsulfanyl-N(6)-dimethylallyladenosine(37) in tRNA + (sulfur carrier)-H + 5'-deoxyadenosine + L-methionine + A + S-adenosyl-L-homocysteine + 2 H(+). Catalyzes the methylthiolation of N6-(dimethylallyl)adenosine (i(6)A), leading to the formation of 2-methylthio-N6-(dimethylallyl)adenosine (ms(2)i(6)A) at position 37 in tRNAs that read codons beginning with uridine. The protein is tRNA-2-methylthio-N(6)-dimethylallyladenosine synthase of Acaryochloris marina (strain MBIC 11017).